A 1222-amino-acid polypeptide reads, in one-letter code: Alpha-mannosidase D (1222 aa).

The signal sequence occupies residues 1–21; the sequence is MESSKFVKIIWVFGIWILVFT. The Extracellular segment spans residues 22–1170; sequence FLIIYNNYDY…KYNRPNHLAL (1149 aa). 2 residues coordinate Zn(2+): His-71 and Asp-73. The N-linked (GlcNAc...) asparagine glycan is linked to Asn-175. Residues Asp-185 and His-453 each contribute to the Zn(2+) site. Asp-185 serves as the catalytic Nucleophile. 13 N-linked (GlcNAc...) asparagine glycosylation sites follow: Asn-492, Asn-496, Asn-547, Asn-551, Asn-566, Asn-613, Asn-665, Asn-768, Asn-785, Asn-952, Asn-981, Asn-1069, and Asn-1084. Low complexity predominate over residues 493-549; the sequence is KSNNKTNNNNNNNNKNNNNNNNNNNNNNNNLKNTNSISTTGSSSSSGSGSSNNNNNT. The segment at 493-554 is disordered; the sequence is KSNNKTNNNN…NNNNTVNKSE (62 aa). Residues 1171–1191 traverse the membrane as a helical segment; the sequence is ILSLSIGIPAGILIIVIALVV. Residues 1192-1222 are Cytoplasmic-facing; that stretch reads TYKKRKNRKTLTSSNSSSNLIQQEDQTDYSP. Low complexity predominate over residues 1202 to 1211; it reads LTSSNSSSNL. The interval 1202-1222 is disordered; sequence LTSSNSSSNLIQQEDQTDYSP. A compositionally biased stretch (polar residues) spans 1212-1222; it reads IQQEDQTDYSP.

The protein belongs to the glycosyl hydrolase 38 family. It depends on Zn(2+) as a cofactor.

It is found in the membrane. The catalysed reaction is Hydrolysis of terminal, non-reducing alpha-D-mannose residues in alpha-D-mannosides.. This is Alpha-mannosidase D (manD) from Dictyostelium discoideum (Social amoeba).